We begin with the raw amino-acid sequence, 183 residues long: Alkyl hydroperoxide reductase AhpD (183 aa).

The Proton donor role is filled by Cys132. A disulfide bridge links Cys132 with Cys135. The active-site Cysteine sulfenic acid (-SOH) intermediate is Cys135.

This sequence belongs to the AhpD family.

It catalyses the reaction N(6)-[(R)-dihydrolipoyl]-L-lysyl-[lipoyl-carrier protein] + a hydroperoxide = N(6)-[(R)-lipoyl]-L-lysyl-[lipoyl-carrier protein] + an alcohol + H2O. Its function is as follows. Antioxidant protein with alkyl hydroperoxidase activity. Required for the reduction of the AhpC active site cysteine residues and for the regeneration of the AhpC enzyme activity. The polypeptide is Alkyl hydroperoxide reductase AhpD (Caulobacter vibrioides (strain ATCC 19089 / CIP 103742 / CB 15) (Caulobacter crescentus)).